Reading from the N-terminus, the 394-residue chain is Phosphoglycerate kinase (394 aa).

Residues 21 to 23 (DFN), Arg36, 59 to 62 (HLGR), Arg118, and Arg151 each bind substrate. Ser183 carries the phosphoserine modification. Lys201 serves as a coordination point for ATP. Thr299 is subject to Phosphothreonine. ATP is bound by residues Glu323 and 350-353 (GGDS).

It belongs to the phosphoglycerate kinase family. Monomer.

Its subcellular location is the cytoplasm. It catalyses the reaction (2R)-3-phosphoglycerate + ATP = (2R)-3-phospho-glyceroyl phosphate + ADP. It functions in the pathway carbohydrate degradation; glycolysis; pyruvate from D-glyceraldehyde 3-phosphate: step 2/5. The protein is Phosphoglycerate kinase of Bacillus pumilus (strain SAFR-032).